A 304-amino-acid polypeptide reads, in one-letter code: MQVSIEDIIENLDLEVLVKGKDGIKLGLSDINRPGLQFAGFYDYFGNERVQVIGKAEWSFLNAMPPEIREKRIRKYFQFETPCIVLARGLKPQKELLDCSKEYNRWLLRSKAQTTRFINKIMNYLDDKLAPETRIHGVLVDIYGLGILITGESGIGKSETALELIKRGHRLVADDAVDIKEIESVLVGKSPYITSGMLEVRGMGIIDVPALYGLSSVLSEKNINLVIYLEQWKEGRDYDRLGTDDEHIKILNIPVRKMTLPIRPGRNVAVIIEAAAANYRYNLSSKISPVDTINKRIEESTNYD.

Active-site residues include histidine 136 and lysine 157. Position 151–158 (151–158 (GESGIGKS)) interacts with ATP. Serine 158 serves as a coordination point for Mg(2+). The Proton acceptor; for phosphorylation activity. Proton donor; for dephosphorylation activity role is filled by aspartate 175. Residues 198 to 207 (LEVRGMGIID) form an important for the catalytic mechanism of both phosphorylation and dephosphorylation region. Glutamate 199 serves as a coordination point for Mg(2+). Residue arginine 240 is part of the active site. An important for the catalytic mechanism of dephosphorylation region spans residues 261 to 266 (PIRPGR).

It belongs to the HPrK/P family. As to quaternary structure, homohexamer. The cofactor is Mg(2+).

The enzyme catalyses [HPr protein]-L-serine + ATP = [HPr protein]-O-phospho-L-serine + ADP + H(+). The catalysed reaction is [HPr protein]-O-phospho-L-serine + phosphate + H(+) = [HPr protein]-L-serine + diphosphate. Functionally, catalyzes the ATP- as well as the pyrophosphate-dependent phosphorylation of a specific serine residue in HPr, a phosphocarrier protein of the phosphoenolpyruvate-dependent sugar phosphotransferase system (PTS). HprK/P also catalyzes the pyrophosphate-producing, inorganic phosphate-dependent dephosphorylation (phosphorolysis) of seryl-phosphorylated HPr (P-Ser-HPr). The two antagonistic activities of HprK/P are regulated by several intracellular metabolites, which change their concentration in response to the absence or presence of rapidly metabolisable carbon sources (glucose, fructose, etc.) in the growth medium. Therefore, by controlling the phosphorylation state of HPr, HPrK/P is a sensor enzyme that plays a major role in the regulation of carbon metabolism and sugar transport: it mediates carbon catabolite repression (CCR), and regulates PTS-catalyzed carbohydrate uptake and inducer exclusion. This chain is HPr kinase/phosphorylase, found in Clostridium acetobutylicum (strain ATCC 824 / DSM 792 / JCM 1419 / IAM 19013 / LMG 5710 / NBRC 13948 / NRRL B-527 / VKM B-1787 / 2291 / W).